Consider the following 211-residue polypeptide: Transcriptional regulator GfcR (211 aa).

This sequence belongs to the purine/pyrimidine phosphoribosyltransferase family. GfcR subfamily.

DNA-binding transcriptional regulator that functions as a regulator of central sugar catabolic pathways. This chain is Transcriptional regulator GfcR, found in Halorubrum lacusprofundi (strain ATCC 49239 / DSM 5036 / JCM 8891 / ACAM 34).